The primary structure comprises 358 residues: tRNA-specific 2-thiouridylase MnmA (358 aa).

ATP is bound by residues 6–13 and leucine 32; that span reads AMSGGVDS. Cysteine 101 acts as the Nucleophile in catalysis. Cysteine 101 and cysteine 193 are disulfide-bonded. Glycine 125 is a binding site for ATP. The interval 143–145 is interaction with tRNA; sequence KDQ. The active-site Cysteine persulfide intermediate is cysteine 193.

It belongs to the MnmA/TRMU family.

Its subcellular location is the cytoplasm. The catalysed reaction is S-sulfanyl-L-cysteinyl-[protein] + uridine(34) in tRNA + AH2 + ATP = 2-thiouridine(34) in tRNA + L-cysteinyl-[protein] + A + AMP + diphosphate + H(+). Functionally, catalyzes the 2-thiolation of uridine at the wobble position (U34) of tRNA, leading to the formation of s(2)U34. The chain is tRNA-specific 2-thiouridylase MnmA from Mycobacterium avium (strain 104).